We begin with the raw amino-acid sequence, 22 residues long: Fuctinin-2 (22 aa).

Positions 1-22 are disordered; the sequence is ELPGLPKGEKEQQEAIEHIDEV. Residues 7-22 are compositionally biased toward basic and acidic residues; sequence KGEKEQQEAIEHIDEV.

To human SET/PHAPII protein. In terms of assembly, oligomer.

It localises to the cytoplasm. In terms of biological role, has a role in the physiological regulation of fucosylation processes. This Rattus norvegicus (Rat) protein is Fuctinin-2.